We begin with the raw amino-acid sequence, 452 residues long: Pup--protein ligase (452 aa).

Glu9 is a Mg(2+) binding site. Arg53 lines the ATP pocket. Tyr55 lines the Mg(2+) pocket. The Proton acceptor role is filled by Asp57. Residue Glu63 participates in Mg(2+) binding. 2 residues coordinate ATP: Thr66 and Trp419.

The protein belongs to the Pup ligase/Pup deamidase family. Pup-conjugating enzyme subfamily.

It carries out the reaction ATP + [prokaryotic ubiquitin-like protein]-L-glutamate + [protein]-L-lysine = ADP + phosphate + N(6)-([prokaryotic ubiquitin-like protein]-gamma-L-glutamyl)-[protein]-L-lysine.. Its pathway is protein degradation; proteasomal Pup-dependent pathway. The protein operates within protein modification; protein pupylation. Functionally, catalyzes the covalent attachment of the prokaryotic ubiquitin-like protein modifier Pup to the proteasomal substrate proteins, thereby targeting them for proteasomal degradation. This tagging system is termed pupylation. The ligation reaction involves the side-chain carboxylate of the C-terminal glutamate of Pup and the side-chain amino group of a substrate lysine. The protein is Pup--protein ligase of Streptosporangium roseum (strain ATCC 12428 / DSM 43021 / JCM 3005 / KCTC 9067 / NCIMB 10171 / NRRL 2505 / NI 9100).